A 433-amino-acid chain; its full sequence is Serine hydroxymethyltransferase (433 aa).

121–123 is a (6S)-5,6,7,8-tetrahydrofolate binding site; the sequence is AHV. K227 carries the N6-(pyridoxal phosphate)lysine modification. (6S)-5,6,7,8-tetrahydrofolate is bound at residue E243.

Belongs to the SHMT family. Homodimer. It depends on pyridoxal 5'-phosphate as a cofactor.

The protein resides in the cytoplasm. It functions in the pathway amino-acid biosynthesis; glycine biosynthesis; glycine from L-serine: step 1/1. In terms of biological role, catalyzes the reversible interconversion of serine and glycine with a modified folate serving as the one-carbon carrier. Also exhibits a pteridine-independent aldolase activity toward beta-hydroxyamino acids, producing glycine and aldehydes, via a retro-aldol mechanism. The chain is Serine hydroxymethyltransferase from Saccharolobus islandicus (strain Y.G.57.14 / Yellowstone #1) (Sulfolobus islandicus).